The chain runs to 76 residues: Liver-expressed antimicrobial peptide 2 (76 aa).

The signal sequence occupies residues 1 to 22; sequence MLQLKLFAVLLTCLLLLGQVNS. Residues 23 to 36 constitute a propeptide that is removed on maturation; sequence SPVPEVSSAKRSRR. Intrachain disulfides connect C53–C64 and C59–C69.

This sequence belongs to the LEAP2 family.

The protein localises to the secreted. In terms of biological role, has an antimicrobial activity. In Mus musculus (Mouse), this protein is Liver-expressed antimicrobial peptide 2 (Leap2).